The chain runs to 109 residues: Peptide chaperone MftB (109 aa).

The protein belongs to the peptide chaperone MftB family.

Functionally, peptide chaperone involved in the biosynthesis of the enzyme cofactor mycofactocin (MFT). Binds MftA and MftC with high affinity, and is essential for MftC activity on MftA, likely via the formation of a ternary complex. The sequence is that of Peptide chaperone MftB from Mycobacterium tuberculosis (strain ATCC 25618 / H37Rv).